The sequence spans 200 residues: Holliday junction resolvase RecU (200 aa).

Residues 1–25 (MTIRYPNGKRYNQASQPHKTPIKKH) are disordered. Residues T85, D87, E100, and Q119 each contribute to the Mg(2+) site.

Belongs to the RecU family. Mg(2+) serves as cofactor.

Its subcellular location is the cytoplasm. The enzyme catalyses Endonucleolytic cleavage at a junction such as a reciprocal single-stranded crossover between two homologous DNA duplexes (Holliday junction).. Endonuclease that resolves Holliday junction intermediates in genetic recombination. Cleaves mobile four-strand junctions by introducing symmetrical nicks in paired strands. Promotes annealing of linear ssDNA with homologous dsDNA. Required for DNA repair, homologous recombination and chromosome segregation. This chain is Holliday junction resolvase RecU, found in Bacillus cereus (strain ZK / E33L).